A 30-amino-acid chain; its full sequence is Small toxic protein BsrE (30 aa).

The helical transmembrane segment at 4–24 threads the bilayer; sequence FQALMLMLAIGSFIIALLTYI.

The protein resides in the cell membrane. Functionally, toxic component of a type I toxin-antitoxin (TA) system; overexpression in the absence of cognate antisense antitoxin SR5 RNA leads to cell lysis. Base pairing occurs between the 3' UTRs of bsrE mRNA and SR5 RNA which leads to bsrE mRNA degradation initiated by RNase III (rnc) and RNase J1 (rnjA). Genetic evidence suggests an unidentified RNA-binding protein may exist that promotes TA RNA interaction. The protein is Small toxic protein BsrE of Bacillus subtilis (strain 168).